Reading from the N-terminus, the 644-residue chain is Archaeal Lon protease (644 aa).

Residues 1–18 (MKTTIKNSRTQESVSYEG) are compositionally biased toward polar residues. Residues 1 to 30 (MKTTIKNSRTQESVSYEGNETKKGTGETLS) are disordered. The Cytoplasmic portion of the chain corresponds to 1 to 137 (MKTTIKNSRT…KARSQDEKKN (137 aa)). 71–78 (GEPGVGKS) contributes to the ATP binding site. Helical transmembrane passes span 138–155 (LFMMLIISFILVLGFMMN) and 156–171 (QFLAAIIAAGIIFLAL). The Cytoplasmic portion of the chain corresponds to 172–644 (QQFRPRTTVM…PSIMKKPAMH (473 aa)). In terms of domain architecture, Lon proteolytic spans 438–617 (GGEVGRVNGL…GDVLEHALIG (180 aa)). Active-site residues include S524 and K567.

This sequence belongs to the peptidase S16 family. Archaeal LonB subfamily. As to quaternary structure, homohexamer. Organized in a ring with a central cavity.

Its subcellular location is the cell membrane. Its function is as follows. ATP-dependent serine protease that mediates the selective degradation of mutant and abnormal proteins as well as certain short-lived regulatory proteins. Degrades polypeptides processively. This Methanothermobacter thermautotrophicus (strain ATCC 29096 / DSM 1053 / JCM 10044 / NBRC 100330 / Delta H) (Methanobacterium thermoautotrophicum) protein is Archaeal Lon protease.